Here is a 261-residue protein sequence, read N- to C-terminus: Hemin import ATP-binding protein HmuV (261 aa).

The region spanning 3 to 243 (LQAQDLSVDR…ANLRRVYGVE (241 aa)) is the ABC transporter domain. Residue 35 to 42 (GANGAGKS) participates in ATP binding.

Belongs to the ABC transporter superfamily. Heme (hemin) importer (TC 3.A.1.14.5) family. In terms of assembly, the complex is composed of two ATP-binding proteins (HmuV), two transmembrane proteins (HmuU) and a solute-binding protein (HmuT).

It localises to the cell inner membrane. Functionally, part of the ABC transporter complex HmuTUV involved in hemin import. Responsible for energy coupling to the transport system. In Bordetella avium (strain 197N), this protein is Hemin import ATP-binding protein HmuV.